An 865-amino-acid polypeptide reads, in one-letter code: Alanine--tRNA ligase (865 aa).

Zn(2+) contacts are provided by His-554, His-558, Cys-656, and His-660.

Belongs to the class-II aminoacyl-tRNA synthetase family. Requires Zn(2+) as cofactor.

The protein resides in the cytoplasm. The catalysed reaction is tRNA(Ala) + L-alanine + ATP = L-alanyl-tRNA(Ala) + AMP + diphosphate. Functionally, catalyzes the attachment of alanine to tRNA(Ala) in a two-step reaction: alanine is first activated by ATP to form Ala-AMP and then transferred to the acceptor end of tRNA(Ala). Also edits incorrectly charged Ser-tRNA(Ala) and Gly-tRNA(Ala) via its editing domain. In Francisella tularensis subsp. novicida (strain U112), this protein is Alanine--tRNA ligase.